Consider the following 216-residue polypeptide: Transmembrane protein 163a (216 aa).

The Cytoplasmic segment spans residues methionine 1–alanine 15. Residues leucine 16 to valine 36 traverse the membrane as a helical segment. The Extracellular segment spans residues serine 37 to alanine 43. Residues serine 44–tryptophan 64 traverse the membrane as a helical segment. The Cytoplasmic segment spans residues arginine 65–arginine 77. A helical membrane pass occupies residues glutamate 78–glycine 98. At lysine 99–aspartate 114 the chain is on the extracellular side. The helical transmembrane segment at phenylalanine 115 to phenylalanine 135 threads the bilayer. Over methionine 136–arginine 144 the chain is Cytoplasmic. The chain crosses the membrane as a helical span at residues alanine 145 to isoleucine 165. Over serine 166–threonine 182 the chain is Extracellular. A helical transmembrane segment spans residues isoleucine 183–isoleucine 203. Residues proline 204 to glutamate 216 lie on the Cytoplasmic side of the membrane.

The protein belongs to the TMEM163 family.

It localises to the cytoplasmic vesicle. The protein localises to the secretory vesicle. The protein resides in the synaptic vesicle membrane. Its subcellular location is the early endosome membrane. It is found in the late endosome membrane. It localises to the lysosome membrane. The protein localises to the cell membrane. The catalysed reaction is Zn(2+)(in) = Zn(2+)(out). Zinc ion transporter that mediates zinc efflux and plays a crucial role in intracellular zinc homeostasis. Binds the divalent cations Zn(2+), Ni(2+), and to a minor extent Cu(2+). Is a functional modulator of P2X purinoceptors, including P2RX1, P2RX3, P2RX4 and P2RX7. Plays a role in central nervous system development and is required for myelination, and survival and proliferation of oligodendrocytes. The chain is Transmembrane protein 163a from Danio rerio (Zebrafish).